A 100-amino-acid polypeptide reads, in one-letter code: Urease subunit gamma (100 aa).

Belongs to the urease gamma subunit family. Heterotrimer of UreA (gamma), UreB (beta) and UreC (alpha) subunits. Three heterotrimers associate to form the active enzyme.

Its subcellular location is the cytoplasm. The catalysed reaction is urea + 2 H2O + H(+) = hydrogencarbonate + 2 NH4(+). Its pathway is nitrogen metabolism; urea degradation; CO(2) and NH(3) from urea (urease route): step 1/1. This chain is Urease subunit gamma, found in Yersinia aldovae.